A 408-amino-acid polypeptide reads, in one-letter code: Argininosuccinate synthase (408 aa).

ATP contacts are provided by residues 12 to 20 (AYSGGLDTS) and Ala39. Residues Tyr90 and Ser95 each coordinate L-citrulline. An ATP-binding site is contributed by Gly120. L-aspartate-binding residues include Thr122, Asn126, and Asp127. Asn126 is an L-citrulline binding site. L-citrulline contacts are provided by Arg130, Ser181, Ser190, Glu266, and Tyr278.

The protein belongs to the argininosuccinate synthase family. Type 1 subfamily. Homotetramer.

The protein resides in the cytoplasm. The enzyme catalyses L-citrulline + L-aspartate + ATP = 2-(N(omega)-L-arginino)succinate + AMP + diphosphate + H(+). The protein operates within amino-acid biosynthesis; L-arginine biosynthesis; L-arginine from L-ornithine and carbamoyl phosphate: step 2/3. The polypeptide is Argininosuccinate synthase (Methylococcus capsulatus (strain ATCC 33009 / NCIMB 11132 / Bath)).